The sequence spans 108 residues: Ig kappa chain V-V region MOPC 173 (108 aa).

Positions aspartate 1–cysteine 23 are framework-1. A disulfide bridge connects residues cysteine 23 and cysteine 88. Residues serine 24 to residue 34 are complementarity-determining-1. The framework-2 stretch occupies residues tryptophan 35–tyrosine 49. Residues tyrosine 50–serine 56 form a complementarity-determining-2 region. A framework-3 region spans residues glycine 57–cysteine 88. The interval glutamine 89–threonine 97 is complementarity-determining-3. Positions phenylalanine 98–arginine 108 are framework-4.

The protein is Ig kappa chain V-V region MOPC 173 of Mus musculus (Mouse).